We begin with the raw amino-acid sequence, 721 residues long: Mitogen-activated protein kinase 6 (721 aa).

Residue methionine 1 forms a Peptide (Met-Gly) (interchain with G-Cter in ubiquitin) linkage. The Protein kinase domain occupies 20 to 316; it reads YMDLKPLGCG…AEEALSHPYM (297 aa). ATP is bound by residues 26–34 and lysine 49; that span reads LGCGGNGLV. The active-site Proton acceptor is aspartate 152. Phosphoserine; by PAK1, PAK2 and PAK3 is present on serine 189. The SEG motif motif lies at 189 to 191; that stretch reads SEG. The FRIEDE motif signature appears at 332–337; the sequence is FHIEDE. A phosphoserine mark is found at serine 386, serine 452, serine 556, serine 558, serine 665, and serine 684. The segment covering 701 to 715 has biased composition (polar residues); it reads AMKSSPQIPHQTYSS. A disordered region spans residues 701 to 721; the sequence is AMKSSPQIPHQTYSSILKHLN.

Belongs to the protein kinase superfamily. CMGC Ser/Thr protein kinase family. MAP kinase subfamily. Heterodimer with ERK4/MAPK4. Interacts with (via FRIEDE motif) MAPKAPK5. Interacts with UBE3A; this interaction may be indirect and mediated by HERC2, possibly via HERC2 interaction with NEURL4. Mg(2+) is required as a cofactor. Phosphorylated at Ser-189 by PAK1, PAK2 and PAK3 resulting in catalytic activation. Phosphorylated by MAPKAPK5 at other sites. Post-translationally, ubiquitination at Met-1 leads to degradation by the proteasome pathway.

The protein resides in the cytoplasm. The protein localises to the nucleus. The enzyme catalyses L-seryl-[protein] + ATP = O-phospho-L-seryl-[protein] + ADP + H(+). It catalyses the reaction L-threonyl-[protein] + ATP = O-phospho-L-threonyl-[protein] + ADP + H(+). Its activity is regulated as follows. Activated by phosphorylation at Ser-189. In terms of biological role, atypical MAPK protein. Phosphorylates microtubule-associated protein 2 (MAP2) and MAPKAPK5. The precise role of the complex formed with MAPKAPK5 is still unclear, but the complex follows a complex set of phosphorylation events: upon interaction with atypical MAPKAPK5, ERK3/MAPK6 is phosphorylated at Ser-189 and then mediates phosphorylation and activation of MAPKAPK5, which in turn phosphorylates ERK3/MAPK6. May promote entry in the cell cycle. The polypeptide is Mitogen-activated protein kinase 6 (MAPK6) (Pongo abelii (Sumatran orangutan)).